Here is a 187-residue protein sequence, read N- to C-terminus: Peptidyl-tRNA hydrolase (187 aa).

Tyr18 provides a ligand contact to tRNA. The Proton acceptor role is filled by His23. Residues Phe65, Asn67, and Asn113 each contribute to the tRNA site.

Belongs to the PTH family. Monomer.

It localises to the cytoplasm. The enzyme catalyses an N-acyl-L-alpha-aminoacyl-tRNA + H2O = an N-acyl-L-amino acid + a tRNA + H(+). Hydrolyzes ribosome-free peptidyl-tRNAs (with 1 or more amino acids incorporated), which drop off the ribosome during protein synthesis, or as a result of ribosome stalling. Functionally, catalyzes the release of premature peptidyl moieties from peptidyl-tRNA molecules trapped in stalled 50S ribosomal subunits, and thus maintains levels of free tRNAs and 50S ribosomes. This Coxiella burnetii (strain RSA 331 / Henzerling II) protein is Peptidyl-tRNA hydrolase.